An 836-amino-acid polypeptide reads, in one-letter code: Probable serine/threonine-protein kinase dyrk1 (836 aa).

Residues 99 to 278 (QQQYQQQHNN…SSNNNNNNKQ (180 aa)) are compositionally biased toward low complexity. The segment at 99 to 286 (QQQYQQQHNN…KQSKYNDGYD (188 aa)) is disordered. Positions 304–624 (FEIISSLGKG…PLEALQHSFF (321 aa)) constitute a Protein kinase domain. ATP contacts are provided by residues 310–318 (LGKGSFGQV) and K333. D432 serves as the catalytic Proton acceptor. Disordered regions lie at residues 627-697 (DETS…QQQQ), 718-767 (TYSP…INSN), and 785-836 (NIYN…NNNI). The segment covering 630-697 (SQPPQQQSQQ…QQLQQQQQQQ (68 aa)) has biased composition (low complexity). Over residues 718 to 728 (TYSPTTQQSNH) the composition is skewed to polar residues. Basic and acidic residues predominate over residues 729–744 (KLVDQMKKASMKDKSP). Residues 785 to 816 (NIYNNNNNNNNNNNNNNNNNNSNNYNNSNELS) are compositionally biased toward low complexity.

The protein belongs to the protein kinase superfamily. CMGC Ser/Thr protein kinase family. MNB/DYRK subfamily.

It catalyses the reaction L-seryl-[protein] + ATP = O-phospho-L-seryl-[protein] + ADP + H(+). The catalysed reaction is L-threonyl-[protein] + ATP = O-phospho-L-threonyl-[protein] + ADP + H(+). It carries out the reaction L-tyrosyl-[protein] + ATP = O-phospho-L-tyrosyl-[protein] + ADP + H(+). This Dictyostelium discoideum (Social amoeba) protein is Probable serine/threonine-protein kinase dyrk1 (dyrk1).